A 341-amino-acid polypeptide reads, in one-letter code: D-aspartate oxidase (341 aa).

Positions 36, 37, 43, 44, 50, 307, 311, and 312 each coordinate FAD. Residues 339–341 (SNL) carry the Microbody targeting signal motif.

Belongs to the DAMOX/DASOX family. In terms of assembly, monomer. Interacts with PEX5; the interaction is direct and required for localization of DDO to the peroxisome. Interacts with DAOA; the interaction is direct and increases the degradation rate of DDO. The cofactor is FAD. In terms of processing, may be S-nitrosylated. Expressed in epithelial cells of the proximal nephron tubules in the renal cortex (at protein level). In the brain, expressed in the frontal, temporal, and occipital lobes of the cortex, hippocampus, striatum, diencephalon, brainstem, cerebellum, spinal cord, plexus choroiderus and ependyma (at protein level). Expression is increased in the prefrontal cortex of schizophrenic patients. Levels are normal in the superior frontal gyrus of patients with Alzheimer's disease.

It localises to the peroxisome matrix. It is found in the cytoplasm. The protein resides in the cytosol. It catalyses the reaction D-aspartate + O2 + H2O = oxaloacetate + H2O2 + NH4(+). It carries out the reaction D-glutamate + O2 + H2O = H2O2 + 2-oxoglutarate + NH4(+). Its activity is regulated as follows. Inhibited by the benzodiazepine olanzapine. Inhibited by aminooxyacetic acid, thiolactomycin, malonate and meso-tartrate. Clozapine, haloperidol and chlorpromazine have no effect on activity. Not inhibited by sodium, potassium, magnesium, iron, calcium, cobalt, copper, nickel, manganese or zinc ions. Not inhibited by AMP, ADP, ATP, or cAMP. Not inhibited by pyridoxal 5'-phosphate. Its function is as follows. Selectively catalyzes the oxidative deamination of acidic amino acids. Suppresses the level of D-aspartate in the brain, an amino acid that can act as an agonist for glutamate receptors. Protects the organism from the toxicity of D-amino acids. May also function in the intestine. The chain is D-aspartate oxidase (DDO) from Homo sapiens (Human).